A 239-amino-acid polypeptide reads, in one-letter code: Pimeloyl-[acyl-carrier protein] methyl ester esterase (239 aa).

Substrate contacts are provided by residues Trp-20, 77–78 (SM), and 138–142 (FISLQ). Ser-77 serves as the catalytic Nucleophile. Catalysis depends on residues Asp-192 and His-220. His-220 serves as a coordination point for substrate.

Belongs to the AB hydrolase superfamily. Carboxylesterase BioH family. In terms of assembly, monomer.

The protein resides in the cytoplasm. It catalyses the reaction 6-carboxyhexanoyl-[ACP] methyl ester + H2O = 6-carboxyhexanoyl-[ACP] + methanol + H(+). It functions in the pathway cofactor biosynthesis; biotin biosynthesis. In terms of biological role, the physiological role of BioH is to remove the methyl group introduced by BioC when the pimeloyl moiety is complete. It allows to synthesize pimeloyl-ACP via the fatty acid synthetic pathway through the hydrolysis of the ester bonds of pimeloyl-ACP esters. In Legionella pneumophila (strain Lens), this protein is Pimeloyl-[acyl-carrier protein] methyl ester esterase.